Consider the following 117-residue polypeptide: NADH-ubiquinone oxidoreductase chain 3 (117 aa).

The next 3 helical transmembrane spans lie at 6 to 26, 58 to 78, and 85 to 105; these read ILIL…ASYI, FFLI…LFPW, and LPLF…LGLI.

It belongs to the complex I subunit 3 family.

Its subcellular location is the mitochondrion membrane. The catalysed reaction is a ubiquinone + NADH + 5 H(+)(in) = a ubiquinol + NAD(+) + 4 H(+)(out). Its function is as follows. Core subunit of the mitochondrial membrane respiratory chain NADH dehydrogenase (Complex I) that is believed to belong to the minimal assembly required for catalysis. Complex I functions in the transfer of electrons from NADH to the respiratory chain. The immediate electron acceptor for the enzyme is believed to be ubiquinone. In Sarcophyton glaucum (Toadstool umbrella leather coral), this protein is NADH-ubiquinone oxidoreductase chain 3 (ND3).